A 202-amino-acid polypeptide reads, in one-letter code: Indolepyruvate oxidoreductase subunit IorB (202 aa).

In terms of assembly, heterodimer of the IorA and IorB subunits.

The catalysed reaction is indole-3-pyruvate + 2 oxidized [2Fe-2S]-[ferredoxin] + CoA = (indol-3-yl)acetyl-CoA + 2 reduced [2Fe-2S]-[ferredoxin] + CO2 + H(+). In terms of biological role, catalyzes the ferredoxin-dependent oxidative decarboxylation of arylpyruvates. The polypeptide is Indolepyruvate oxidoreductase subunit IorB (iorB) (Pyrococcus horikoshii (strain ATCC 700860 / DSM 12428 / JCM 9974 / NBRC 100139 / OT-3)).